The sequence spans 359 residues: 4-hydroxy-3-methylbut-2-en-1-yl diphosphate synthase (flavodoxin) (359 aa).

[4Fe-4S] cluster-binding residues include Cys-264, Cys-267, Cys-299, and Glu-306.

This sequence belongs to the IspG family. The cofactor is [4Fe-4S] cluster.

It catalyses the reaction (2E)-4-hydroxy-3-methylbut-2-enyl diphosphate + oxidized [flavodoxin] + H2O + 2 H(+) = 2-C-methyl-D-erythritol 2,4-cyclic diphosphate + reduced [flavodoxin]. The protein operates within isoprenoid biosynthesis; isopentenyl diphosphate biosynthesis via DXP pathway; isopentenyl diphosphate from 1-deoxy-D-xylulose 5-phosphate: step 5/6. Its function is as follows. Converts 2C-methyl-D-erythritol 2,4-cyclodiphosphate (ME-2,4cPP) into 1-hydroxy-2-methyl-2-(E)-butenyl 4-diphosphate. This Helicobacter pylori (strain HPAG1) protein is 4-hydroxy-3-methylbut-2-en-1-yl diphosphate synthase (flavodoxin).